Consider the following 307-residue polypeptide: UDP-3-O-acyl-N-acetylglucosamine deacetylase (307 aa).

Residues His-79, His-239, and Asp-243 each coordinate Zn(2+). His-266 acts as the Proton donor in catalysis.

It belongs to the LpxC family. Zn(2+) is required as a cofactor.

The enzyme catalyses a UDP-3-O-[(3R)-3-hydroxyacyl]-N-acetyl-alpha-D-glucosamine + H2O = a UDP-3-O-[(3R)-3-hydroxyacyl]-alpha-D-glucosamine + acetate. It functions in the pathway glycolipid biosynthesis; lipid IV(A) biosynthesis; lipid IV(A) from (3R)-3-hydroxytetradecanoyl-[acyl-carrier-protein] and UDP-N-acetyl-alpha-D-glucosamine: step 2/6. Catalyzes the hydrolysis of UDP-3-O-myristoyl-N-acetylglucosamine to form UDP-3-O-myristoylglucosamine and acetate, the committed step in lipid A biosynthesis. This chain is UDP-3-O-acyl-N-acetylglucosamine deacetylase, found in Tolumonas auensis (strain DSM 9187 / NBRC 110442 / TA 4).